The primary structure comprises 576 residues: uncharacterized protein (576 aa).

An N-terminal signal peptide occupies residues Met1–Ala28. The active-site Acyl-ester intermediate is Ser185. 2 disulfide bridges follow: Cys252–Cys269 and Cys278–Cys286. Residues Asp253, Asp256, Asp260, and Val262 each contribute to the Ca(2+) site. Catalysis depends on charge relay system residues Asp414 and His464. A disulfide bridge connects residues Cys529 and Cys551.

This sequence belongs to the tannase family.

This is an uncharacterized protein from Xanthomonas campestris pv. campestris (strain ATCC 33913 / DSM 3586 / NCPPB 528 / LMG 568 / P 25).